The following is a 227-amino-acid chain: Thymidylate kinase (227 aa).

An ATP-binding site is contributed by 16–23 (GIDGAGKT).

This sequence belongs to the thymidylate kinase family.

It catalyses the reaction dTMP + ATP = dTDP + ADP. Its function is as follows. Phosphorylation of dTMP to form dTDP in both de novo and salvage pathways of dTTP synthesis. The polypeptide is Thymidylate kinase (Xanthomonas oryzae pv. oryzae (strain MAFF 311018)).